Reading from the N-terminus, the 55-residue chain is MKFQMRKCKECGEYTLEESCPECNVKTGVIFPARYSPQDKYGKYRRILKRQQMEK.

The protein belongs to the NOP10 family.

Involved in ribosome biogenesis; more specifically in 18S rRNA pseudouridylation and in cleavage of pre-rRNA. This Methanosphaera stadtmanae (strain ATCC 43021 / DSM 3091 / JCM 11832 / MCB-3) protein is Ribosome biogenesis protein Nop10.